A 401-amino-acid chain; its full sequence is Imidazolonepropionase (401 aa).

Positions 70 and 72 each coordinate Fe(3+). Zn(2+)-binding residues include histidine 70 and histidine 72. 4-imidazolone-5-propanoate-binding residues include arginine 79, tyrosine 142, and histidine 175. Tyrosine 142 provides a ligand contact to N-formimidoyl-L-glutamate. Position 238 (histidine 238) interacts with Fe(3+). Residue histidine 238 participates in Zn(2+) binding. Position 241 (glutamine 241) interacts with 4-imidazolone-5-propanoate. Aspartate 313 is a binding site for Fe(3+). Zn(2+) is bound at residue aspartate 313. Residues asparagine 315 and glycine 317 each contribute to the N-formimidoyl-L-glutamate site. 4-imidazolone-5-propanoate is bound at residue threonine 318.

This sequence belongs to the metallo-dependent hydrolases superfamily. HutI family. It depends on Zn(2+) as a cofactor. Fe(3+) serves as cofactor.

The protein resides in the cytoplasm. The enzyme catalyses 4-imidazolone-5-propanoate + H2O = N-formimidoyl-L-glutamate. Its pathway is amino-acid degradation; L-histidine degradation into L-glutamate; N-formimidoyl-L-glutamate from L-histidine: step 3/3. Its function is as follows. Catalyzes the hydrolytic cleavage of the carbon-nitrogen bond in imidazolone-5-propanoate to yield N-formimidoyl-L-glutamate. It is the third step in the universal histidine degradation pathway. The chain is Imidazolonepropionase from Xanthomonas axonopodis pv. citri (strain 306).